Consider the following 159-residue polypeptide: Cyclic pyranopterin monophosphate synthase (159 aa).

Substrate is bound by residues 76-78 and 114-115; these read MCH and ME. Asp129 is a catalytic residue.

It belongs to the MoaC family. In terms of assembly, homohexamer; trimer of dimers.

The enzyme catalyses (8S)-3',8-cyclo-7,8-dihydroguanosine 5'-triphosphate = cyclic pyranopterin phosphate + diphosphate. It participates in cofactor biosynthesis; molybdopterin biosynthesis. In terms of biological role, catalyzes the conversion of (8S)-3',8-cyclo-7,8-dihydroguanosine 5'-triphosphate to cyclic pyranopterin monophosphate (cPMP). The polypeptide is Cyclic pyranopterin monophosphate synthase (Natranaerobius thermophilus (strain ATCC BAA-1301 / DSM 18059 / JW/NM-WN-LF)).